Reading from the N-terminus, the 576-residue chain is Small ribosomal subunit protein mS80 (rPPR6) (576 aa).

The transit peptide at 1 to 76 (MLRSFLCRSQ…SLPADEIPIS (76 aa)) directs the protein to the mitochondrion. PPR repeat units lie at residues 230–264 (NLEI…GFTP), 265–299 (NAKT…GVLS), 300–336 (EGEQ…SLPP), 341–370 (TLIT…ARRR), 371–405 (GIKP…GPAP), 406–440 (GNAV…GLKP), 441–475 (DVYT…HKKL), 476–510 (SPVT…GVQP), and 511–546 (NADE…GLHL).

Belongs to the PPR family. P subfamily. Component of the mitochondrial ribosome small subunit.

Its subcellular location is the mitochondrion. The chain is Small ribosomal subunit protein mS80 (rPPR6) from Arabidopsis thaliana (Mouse-ear cress).